A 664-amino-acid polypeptide reads, in one-letter code: Type IV inositol polyphosphate 5-phosphatase 3 (664 aa).

The interval 35 to 76 (GRDPEYGADTDNESENEDAREDNDDSSSDEEGGSGSRGRESK) is disordered. Over residues 40–66 (YGADTDNESENEDAREDNDDSSSDEEG) the composition is skewed to acidic residues. Catalytic stretches follow at residues 514-529 (ERII…LSSS) and 592-607 (PKRT…SYGK).

Belongs to the inositol polyphosphate 5-phosphatase family.

It carries out the reaction a 1,2-diacyl-sn-glycero-3-phospho-(1D-myo-inositol-4,5-bisphosphate) + H2O = a 1,2-diacyl-sn-glycero-3-phospho-(1D-myo-inositol 4-phosphate) + phosphate. It catalyses the reaction a 1,2-diacyl-sn-glycero-3-phospho-(1D-myo-inositol-3,4,5-trisphosphate) + H2O = a 1,2-diacyl-sn-glycero-3-phospho-(1D-myo-inositol-3,4-bisphosphate) + phosphate. In terms of biological role, has phosphatase activity toward PtdIns(4,5)P2 and PtdIns(3,4,5)P3. This chain is Type IV inositol polyphosphate 5-phosphatase 3, found in Arabidopsis thaliana (Mouse-ear cress).